The sequence spans 419 residues: eIF5-mimic protein 2 (419 aa).

N-acetylmethionine is present on methionine 1. Polar residues predominate over residues 1-15 (MNNQKQQKPTLSGQR). Residues 1–26 (MNNQKQQKPTLSGQRFKTRKRDEKER) are disordered. Serine 12 carries the phosphoserine modification. Residues 247–414 (NQQTIGARKE…KNAEEESESE (168 aa)) enclose the W2 domain. Lysine 368 participates in a covalent cross-link: Glycyl lysine isopeptide (Lys-Gly) (interchain with G-Cter in SUMO2). 2 positions are modified to phosphoserine: serine 411 and serine 413.

The protein belongs to the BZW family.

Functionally, translation initiation regulator which represses repeat-associated non-AUG (RAN) initiated translation probably by acting as a competitive inhibitor of eukaryotic translation initiation factor 5 (EIF5) function. Enhances histone H4 gene transcription but does not seem to bind DNA directly. The chain is eIF5-mimic protein 2 (BZW1) from Pongo abelii (Sumatran orangutan).